The sequence spans 137 residues: Basic phospholipase A2 homolog APL-K49 (137 aa).

An N-terminal signal peptide occupies residues 1–16; sequence MRTLWIVALLLVGVEG. 7 cysteine pairs are disulfide-bonded: C42–C131, C44–C60, C59–C111, C65–C137, C66–C104, C73–C97, and C91–C102. The segment at 121-133 is important for membrane-damaging activities in eukaryotes and bacteria; heparin-binding; that stretch reads KKYKAYFKLKCKK.

It belongs to the phospholipase A2 family. Group II subfamily. K49 sub-subfamily. In terms of assembly, monomer. As to expression, expressed by the venom gland.

Its subcellular location is the secreted. In terms of biological role, snake venom phospholipase A2 (PLA2) that lacks enzymatic activity. Does not show antibacterial activity. Is myotoxic and displays edema-inducing activities. A model of myotoxic mechanism has been proposed: an apo Lys49-PLA2 is activated by the entrance of a hydrophobic molecule (e.g. fatty acid) at the hydrophobic channel of the protein leading to a reorientation of a monomer. This reorientation causes a transition between 'inactive' to 'active' states, causing alignment of C-terminal and membrane-docking sites (MDoS) side-by-side and putting the membrane-disruption sites (MDiS) in the same plane, exposed to solvent and in a symmetric position for both monomers. The MDoS region stabilizes the toxin on membrane by the interaction of charged residues with phospholipid head groups. Subsequently, the MDiS region destabilizes the membrane with penetration of hydrophobic residues. This insertion causes a disorganization of the membrane, allowing an uncontrolled influx of ions (i.e. calcium and sodium), and eventually triggering irreversible intracellular alterations and cell death. The polypeptide is Basic phospholipase A2 homolog APL-K49 (Agkistrodon piscivorus leucostoma (Western cottonmouth)).